A 1772-amino-acid polypeptide reads, in one-letter code: Putative stereocilin-like protein (1772 aa).

The first 25 residues, 1 to 25 (MALSLWPLLLLLLLLLLLSFAVTLA), serve as a signal peptide directing secretion. N-linked (GlcNAc...) asparagine glycans are attached at residues N65, N427, N476, and N565.

Belongs to the stereocilin family.

Its subcellular location is the secreted. The polypeptide is Putative stereocilin-like protein (STRCP1) (Homo sapiens (Human)).